The sequence spans 909 residues: E3 ubiquitin-protein ligase HACE1 (909 aa).

Residues 1 to 21 (MERAMEQLNRLTRSLRRARTV) form an N-terminal helix important for homodimerization region. ANK repeat units follow at residues 23–55 (LPED…NSKF), 64–93 (VKRS…NPNY), 97–126 (SGCT…DVNI), 130–159 (EGLT…DVDV), 163–192 (MGQT…DINR), 196–226 (SGAT…YLPD), and 228–253 (NGVT…QYHP). The disordered stretch occupies residues 398–433 (QDQEAPSLSAFEPPGPGSYESLPPGPGDSKPEVLAG). Positions 574 to 909 (NCAKLKQGIA…HCGSYGYTMA (336 aa)) constitute an HECT domain. Cysteine 876 serves as the catalytic Glycyl thioester intermediate.

Homodimer. The homodimer is autoinhibited and stabilized by its N-terminal helix. Interacts with RAB1 (RAB1A, RAB1B or RAB1C), RAB4 (RAB4A or RAB4B) and RAB11 (RAB11A or RAB11B); in a GTP-dependent manner. Interacts with the 26S proteasomal complex through the 20S core proteasomal subunit. Interacts with RARB. In terms of processing, autoubiquitinated.

Its subcellular location is the golgi apparatus. It localises to the golgi stack membrane. The protein localises to the cytoplasm. The protein resides in the endoplasmic reticulum. It catalyses the reaction S-ubiquitinyl-[E2 ubiquitin-conjugating enzyme]-L-cysteine + [acceptor protein]-L-lysine = [E2 ubiquitin-conjugating enzyme]-L-cysteine + N(6)-ubiquitinyl-[acceptor protein]-L-lysine.. Its pathway is protein modification; protein ubiquitination. Its activity is regulated as follows. Sterically autoinhibited in its dimeric state. In terms of biological role, E3 ubiquitin-protein ligase involved in Golgi membrane fusion and regulation of small GTPases. Acts as a regulator of Golgi membrane dynamics during the cell cycle: recruited to Golgi membrane by Rab proteins and regulates postmitotic Golgi membrane fusion. Acts by mediating ubiquitination during mitotic Golgi disassembly, ubiquitination serving as a signal for Golgi reassembly later, after cell division. Specifically binds GTP-bound RAC1, mediating ubiquitination and subsequent degradation of active RAC1, thereby playing a role in host defense against pathogens. May also act as a transcription regulator via its interaction with RARB. The chain is E3 ubiquitin-protein ligase HACE1 (Hace1) from Mus musculus (Mouse).